The sequence spans 70 residues: Protein 4.3 (70 aa).

The polypeptide is Protein 4.3 (Escherichia coli (Bacteriophage T7)).